A 308-amino-acid chain; its full sequence is Aspartate carbamoyltransferase catalytic subunit (308 aa).

Residues Arg-55 and Thr-56 each coordinate carbamoyl phosphate. Lys-85 is an L-aspartate binding site. Residues Arg-106, His-135, and Gln-138 each coordinate carbamoyl phosphate. L-aspartate-binding residues include Arg-168 and Arg-229. The carbamoyl phosphate site is built by Leu-267 and Pro-268.

This sequence belongs to the aspartate/ornithine carbamoyltransferase superfamily. ATCase family. As to quaternary structure, heterododecamer (2C3:3R2) of six catalytic PyrB chains organized as two trimers (C3), and six regulatory PyrI chains organized as three dimers (R2).

It catalyses the reaction carbamoyl phosphate + L-aspartate = N-carbamoyl-L-aspartate + phosphate + H(+). It functions in the pathway pyrimidine metabolism; UMP biosynthesis via de novo pathway; (S)-dihydroorotate from bicarbonate: step 2/3. Catalyzes the condensation of carbamoyl phosphate and aspartate to form carbamoyl aspartate and inorganic phosphate, the committed step in the de novo pyrimidine nucleotide biosynthesis pathway. The sequence is that of Aspartate carbamoyltransferase catalytic subunit from Laribacter hongkongensis (strain HLHK9).